Consider the following 464-residue polypeptide: Protein FAM90A24 (464 aa).

Disordered stretches follow at residues 1-42, 69-389, and 415-437; these read MMAR…DPRL, VPAT…HDGA, and HSPE…SEAP. Composition is skewed to basic and acidic residues over residues 74–89 and 97–114; these read GKKE…KPRG and NKDK…DPQR. Over residues 180 to 197 the composition is skewed to low complexity; that stretch reads LASLSPLRKASLSSSSSL.

It belongs to the FAM90 family.

The sequence is that of Protein FAM90A24 from Homo sapiens (Human).